Reading from the N-terminus, the 121-residue chain is NAD(P)H-quinone oxidoreductase subunit M (121 aa).

The protein belongs to the complex I NdhM subunit family. As to quaternary structure, NDH-1 can be composed of about 15 different subunits; different subcomplexes with different compositions have been identified which probably have different functions.

The protein resides in the cellular thylakoid membrane. It carries out the reaction a plastoquinone + NADH + (n+1) H(+)(in) = a plastoquinol + NAD(+) + n H(+)(out). It catalyses the reaction a plastoquinone + NADPH + (n+1) H(+)(in) = a plastoquinol + NADP(+) + n H(+)(out). NDH-1 shuttles electrons from an unknown electron donor, via FMN and iron-sulfur (Fe-S) centers, to quinones in the respiratory and/or the photosynthetic chain. The immediate electron acceptor for the enzyme in this species is believed to be plastoquinone. Couples the redox reaction to proton translocation, and thus conserves the redox energy in a proton gradient. Cyanobacterial NDH-1 also plays a role in inorganic carbon-concentration. This Synechococcus sp. (strain JA-2-3B'a(2-13)) (Cyanobacteria bacterium Yellowstone B-Prime) protein is NAD(P)H-quinone oxidoreductase subunit M.